The chain runs to 279 residues: Formamidopyrimidine-DNA glycosylase (279 aa).

P2 (schiff-base intermediate with DNA) is an active-site residue. The Proton donor role is filled by E3. K57 functions as the Proton donor; for beta-elimination activity in the catalytic mechanism. The DNA site is built by H90, R109, and R151. An FPG-type zinc finger spans residues 236 to 270; sequence FVYGRTGQPCRVCQTPIAVLRLGQRSTFYCPACQQ. Catalysis depends on R260, which acts as the Proton donor; for delta-elimination activity.

Belongs to the FPG family. In terms of assembly, monomer. Requires Zn(2+) as cofactor.

It carries out the reaction Hydrolysis of DNA containing ring-opened 7-methylguanine residues, releasing 2,6-diamino-4-hydroxy-5-(N-methyl)formamidopyrimidine.. It catalyses the reaction 2'-deoxyribonucleotide-(2'-deoxyribose 5'-phosphate)-2'-deoxyribonucleotide-DNA = a 3'-end 2'-deoxyribonucleotide-(2,3-dehydro-2,3-deoxyribose 5'-phosphate)-DNA + a 5'-end 5'-phospho-2'-deoxyribonucleoside-DNA + H(+). Involved in base excision repair of DNA damaged by oxidation or by mutagenic agents. Acts as a DNA glycosylase that recognizes and removes damaged bases. Has a preference for oxidized purines, such as 7,8-dihydro-8-oxoguanine (8-oxoG). Has AP (apurinic/apyrimidinic) lyase activity and introduces nicks in the DNA strand. Cleaves the DNA backbone by beta-delta elimination to generate a single-strand break at the site of the removed base with both 3'- and 5'-phosphates. The protein is Formamidopyrimidine-DNA glycosylase of Methylobacillus flagellatus (strain ATCC 51484 / DSM 6875 / VKM B-1610 / KT).